We begin with the raw amino-acid sequence, 151 residues long: Protein-export protein SecB (151 aa).

Belongs to the SecB family. In terms of assembly, homotetramer, a dimer of dimers. One homotetramer interacts with 1 SecA dimer.

The protein localises to the cytoplasm. Functionally, one of the proteins required for the normal export of preproteins out of the cell cytoplasm. It is a molecular chaperone that binds to a subset of precursor proteins, maintaining them in a translocation-competent state. It also specifically binds to its receptor SecA. The protein is Protein-export protein SecB of Acinetobacter baylyi (strain ATCC 33305 / BD413 / ADP1).